A 204-amino-acid polypeptide reads, in one-letter code: MARGPRYKVPRRRRREGKTNYYKRYTMALSRKPRFVVRKSNKYVWVQVIEFAPEGDKVIAAAHSKELEKKYGWKGYGNSLPAVYLTGMLAALRAKKAGIQYAVPDIGLHKPTKGARVFAAIKAANDVGLEVPVGDVVPDESRIRGEHIASYAESLKNENPEEYQRRFAKLLERGLKPEDYPKHFEEVKAKILEDYKVEQPATTG.

This sequence belongs to the universal ribosomal protein uL18 family. As to quaternary structure, part of the 50S ribosomal subunit. Contacts the 5S and 23S rRNAs.

In terms of biological role, this is one of the proteins that bind and probably mediate the attachment of the 5S RNA into the large ribosomal subunit, where it forms part of the central protuberance. The sequence is that of Large ribosomal subunit protein uL18 from Ignicoccus hospitalis (strain KIN4/I / DSM 18386 / JCM 14125).